A 666-amino-acid chain; its full sequence is Protein OS-9 (666 aa).

An N-terminal signal peptide occupies residues 1 to 30; the sequence is MAAEALLSSLLGLLFLGLLLPAHLTGGVGS. The MRH domain maps to 108–230; the sequence is APCLLKTKDW…SIRTSRLCPH (123 aa). Cysteines 110 and 123 form a disulfide. Trp-117, Trp-118, and Gln-130 together coordinate a mannooligosaccharide derivative. Asn-177 is a glycosylation site (N-linked (GlcNAc...) asparagine). Intrachain disulfides connect Cys-181–Cys-216 and Cys-196–Cys-228. A mannooligosaccharide derivative contacts are provided by Asp-182, Arg-188, Glu-212, and Tyr-218. Disordered stretches follow at residues 261-356, 370-449, 505-540, and 631-666; these read RQAE…NVQV, EELK…SDRE, ESQS…EHRV, and EANK…EFDF. Basic and acidic residues-rich tracts occupy residues 263–281 and 294–310; these read AESK…DTDH and PKKE…ESEF. Low complexity predominate over residues 320 to 332; sequence QATGTEEAQAGEQ. Basic and acidic residues-rich tracts occupy residues 370–379 and 395–412; these read EELKGAEKGK and PQRE…RGLV. Acidic residues predominate over residues 413–429; that stretch reads EEEDGDEEEEDEDEDEQ. Positions 434–449 are enriched in basic and acidic residues; the sequence is EFEKELEGMLLPSDRE. Positions 631–646 are enriched in basic and acidic residues; it reads EANKERQRQSELESNY. Positions 657 to 666 are enriched in acidic residues; the sequence is DTGDLDEFDF.

The protein belongs to the OS-9 family. In terms of assembly, component of the HRD1 complex, which comprises at least SYNV1/HRD1, DERL1/2, FAM8A1, HERPUD1/HERP, OS9, SEL1L and UBE2J1. FAM8A1 is stabilized by interaction with SYNV1, which prevents its proteasomal degradation. OS9 and UBE2J1 recruitment to the complex may be mediated by SEL1L. Through this complex, may interact with ERLEC1 and HSPA5. Interacts (via C-terminus) with CPNE6 (via second C2 domain); this interaction occurs in a calcium-dependent manner in vitro. Interacts with CREB3. Post-translationally, intramolecular disulfide bonds.

It localises to the endoplasmic reticulum lumen. Lectin component of the HRD1 complex, which functions in endoplasmic reticulum (ER) quality control and ER-associated degradation (ERAD). Specifically recognizes and binds improperly folded glycoproteins as well as hyperglycosylated proteins, retain them in the ER, and transfers them to the ubiquitination machinery and promote their degradation. Possible targets include TRPV4 as well as hyperglycosylated HSP90B1. This chain is Protein OS-9 (Os9), found in Rattus norvegicus (Rat).